The primary structure comprises 108 residues: Small ribosomal subunit protein uS17 (108 aa).

Belongs to the universal ribosomal protein uS17 family. In terms of assembly, part of the 30S ribosomal subunit.

In terms of biological role, one of the primary rRNA binding proteins, it binds specifically to the 5'-end of 16S ribosomal RNA. The polypeptide is Small ribosomal subunit protein uS17 (Methanoregula boonei (strain DSM 21154 / JCM 14090 / 6A8)).